A 1013-amino-acid chain; its full sequence is Poly [ADP-ribose] polymerase 1 (1013 aa).

2 consecutive PARP-type zinc fingers follow at residues tyrosine 10–glycine 92 and phenylalanine 113–lysine 203. Cysteine 22, cysteine 25, histidine 54, cysteine 57, cysteine 125, cysteine 128, histidine 159, and cysteine 162 together coordinate Zn(2+). The interval valine 202–leucine 228 is disordered. The short motif at lysine 207–lysine 209 is the Nuclear localization signal element. Positions lysine 219 to lysine 353 constitute a PADR1 zinc-binding domain. Positions glycine 284–aspartate 326 are zinc ribbon. Cysteine 289, cysteine 292, cysteine 305, and cysteine 315 together coordinate Zn(2+). The interval lysine 353–proline 385 is disordered. Positions proline 356–serine 378 are enriched in low complexity. The tract at residues glycine 365–lysine 523 is automodification domain. Positions proline 385 to aspartate 461 constitute a BRCT domain. PolyADP-ribosyl glutamic acid occurs at positions 413, 435, 444, 445, 464, 471, 484, and 488. The span at alanine 494–threonine 507 shows a compositional bias: low complexity. The disordered stretch occupies residues alanine 494–methionine 522. 2 positions are modified to polyADP-ribosyl glutamic acid: glutamate 512 and glutamate 513. Residues cysteine 541–phenylalanine 637 form the WGR domain. Residues lysine 661–arginine 778 form the PARP alpha-helical domain. Positions aspartate 787–tryptophan 1013 constitute a PARP catalytic domain. NAD(+) contacts are provided by residues histidine 861–serine 863, glycine 870, arginine 877, and serine 903. Glutamate 987 functions as the For poly [ADP-ribose] polymerase activity in the catalytic mechanism.

The protein belongs to the ARTD/PARP family. In terms of assembly, homodimer; PARP-type zinc-fingers from separate parp1 molecules form a dimer module that specifically recognizes DNA strand breaks. In terms of processing, poly-ADP-ribosylated on serine, glutamate and aspartate residues by autocatalysis. Auto-ADP-ribosylation on serine takes place following interaction with HPF1. Auto poly-ADP-ribosylation on serine residues promotes its dissociation from chromatin.

It localises to the chromosome. The protein localises to the nucleus. It is found in the nucleolus. The protein resides in the cytoplasm. Its subcellular location is the cytosol. It carries out the reaction NAD(+) + (ADP-D-ribosyl)n-acceptor = nicotinamide + (ADP-D-ribosyl)n+1-acceptor + H(+).. The enzyme catalyses L-seryl-[protein] + NAD(+) = O-(ADP-D-ribosyl)-L-seryl-[protein] + nicotinamide + H(+). The catalysed reaction is L-aspartyl-[protein] + NAD(+) = 4-O-(ADP-D-ribosyl)-L-aspartyl-[protein] + nicotinamide. It catalyses the reaction L-glutamyl-[protein] + NAD(+) = 5-O-(ADP-D-ribosyl)-L-glutamyl-[protein] + nicotinamide. It carries out the reaction L-tyrosyl-[protein] + NAD(+) = O-(ADP-D-ribosyl)-L-tyrosyl-[protein] + nicotinamide + H(+). The enzyme catalyses L-histidyl-[protein] + NAD(+) = N(tele)-(ADP-D-ribosyl)-L-histidyl-[protein] + nicotinamide + H(+). ADP-ribosyltransferase activity is regulated via an allosteric activation mechanism. In absence of activation signal, parp1 is autoinhibited by the PARP alpha-helical domain (also named HD region), which prevents effective NAD(+)-binding. Activity is highly stimulated by signals, such as DNA strand breaks. Binding to damaged DNA unfolds the PARP alpha-helical domain, relieving autoinhibition. Poly-ADP-ribosyltransferase activity is tightly regulated and parp1 is removed from damaged chromatin following initial poly-ADP-ribosylation of chromatin to avoid prolonged residence (trapping) that has cytotoxic consequences. A number of factors or post-translational modifications (auto-poly-ADP-ribosylation) promote parp1 removal from chromatin. Poly-ADP-ribosyltransferase that mediates poly-ADP-ribosylation of proteins and plays a key role in DNA repair. Mediates glutamate, aspartate, serine, histidine or tyrosine ADP-ribosylation of proteins: the ADP-D-ribosyl group of NAD(+) is transferred to the acceptor carboxyl group of target residues and further ADP-ribosyl groups are transferred to the 2'-position of the terminal adenosine moiety, building up a polymer with an average chain length of 20-30 units. Serine ADP-ribosylation of proteins constitutes the primary form of ADP-ribosylation of proteins in response to DNA damage. Specificity for the different amino acids is conferred by interacting factors, such as hpf1 and nmnat1. Following interaction with hpf1, catalyzes serine ADP-ribosylation of target proteins; hpf1 confers serine specificity by completing the parp1 active site. Also catalyzes tyrosine ADP-ribosylation of target proteins following interaction with hpf1. Following interaction with nmnat1, catalyzes glutamate and aspartate ADP-ribosylation of target proteins; nmnat1 confers glutamate and aspartate specificity. Parp1 initiates the repair of DNA breaks: recognizes and binds DNA breaks within chromatin and recruits hpf1, licensing serine ADP-ribosylation of target proteins, such as histones (H2BS6ADPr and H3S10ADPr), thereby promoting decompaction of chromatin and the recruitment of repair factors leading to the reparation of DNA strand breaks. In addition to base excision repair (BER) pathway, also involved in double-strand breaks (DSBs) repair. Mediates the poly-ADP-ribosylation of a number of proteins. In addition to proteins, also able to ADP-ribosylate DNA: catalyzes ADP-ribosylation of DNA strand break termini containing terminal phosphates and a 2'-OH group in single- and double-stranded DNA, respectively. Parp1-mediated DNA repair in neurons plays a role in sleep: senses DNA damage in neurons and promotes sleep, facilitating efficient DNA repair. In addition to DNA repair, also involved in other processes, such as transcription regulation, programmed cell death, membrane repair, adipogenesis and innate immunity. Acts as a repressor of transcription: binds to nucleosomes and modulates chromatin structure in a manner similar to histone H1, thereby altering RNA polymerase II. Acts both as a positive and negative regulator of transcription elongation, depending on the context. Poly-ADP-ribose chains generated by parp1 also play a role in poly-ADP-ribose-dependent cell death, a process named parthanatos. Also acts as a negative regulator of the cGAS-STING pathway by mediating poly-ADP-ribosylation and inactivation of cgas. Acts as a negative regulator of adipogenesis by catalyzing poly ADP-ribosylation of histone H2B on 'Glu-35' (H2BE35ADPr). The sequence is that of Poly [ADP-ribose] polymerase 1 from Danio rerio (Zebrafish).